Consider the following 137-residue polypeptide: Large ribosomal subunit protein uL16 (137 aa).

Belongs to the universal ribosomal protein uL16 family. As to quaternary structure, part of the 50S ribosomal subunit.

Binds 23S rRNA and is also seen to make contacts with the A and possibly P site tRNAs. The sequence is that of Large ribosomal subunit protein uL16 from Francisella tularensis subsp. tularensis (strain FSC 198).